A 197-amino-acid polypeptide reads, in one-letter code: Imidazoleglycerol-phosphate dehydratase (197 aa).

The protein belongs to the imidazoleglycerol-phosphate dehydratase family.

The protein resides in the cytoplasm. The enzyme catalyses D-erythro-1-(imidazol-4-yl)glycerol 3-phosphate = 3-(imidazol-4-yl)-2-oxopropyl phosphate + H2O. It functions in the pathway amino-acid biosynthesis; L-histidine biosynthesis; L-histidine from 5-phospho-alpha-D-ribose 1-diphosphate: step 6/9. This Marinobacter nauticus (strain ATCC 700491 / DSM 11845 / VT8) (Marinobacter aquaeolei) protein is Imidazoleglycerol-phosphate dehydratase.